Consider the following 668-residue polypeptide: Hemocyanin subunit D (668 aa).

The signal sequence occupies residues 1–22 (MDTRVLRLTLALVALSGVLADS). The Cu cation site is built by His-206, His-210, and His-236. An N-linked (GlcNAc...) asparagine glycan is attached at Asn-322. Residues His-357, His-361, and His-397 each coordinate Cu cation. A disulfide bond links Cys-567 and Cys-614.

It belongs to the tyrosinase family. Hemocyanin subfamily. In terms of assembly, 36-chain polymer consisting of 6 hexamers, each of which includes 4 different chains, A, B, C and D. Hemolymph.

The protein localises to the secreted. The protein resides in the extracellular space. Functionally, hemocyanins are copper-containing oxygen carriers occurring freely dissolved in the hemolymph of many mollusks and arthropods. In Scutigera coleoptrata (House centipede), this protein is Hemocyanin subunit D (HCD).